The sequence spans 505 residues: Metal transporter Nramp3.2 (505 aa).

12 helical membrane passes run 50–70 (LWLF…PGNL), 78–98 (AIAG…GLLV), 127–147 (MVLW…EVIG), 159–179 (FVPL…FLFL), 187–207 (LEAV…WMFA), 233–253 (AVGV…SALV), 280–300 (ALVI…KGFY), 321–341 (YGGG…AAGQ), 369–389 (ALIT…VFDT), 400–420 (WLNV…LCLV), 439–459 (AWLV…DFFF), and 466–486 (AFTT…IYLI).

This sequence belongs to the NRAMP (TC 2.A.55) family. Expressed in roots, stems, buds and leaves.

Its subcellular location is the vacuole membrane. It carries out the reaction Mn(2+)(in) = Mn(2+)(out). The catalysed reaction is Fe(2+)(in) = Fe(2+)(out). Divalent metal transporter. Can transport manganese (Mn) and iron (Fe). Involved in the release of metals stored in the vacuole. This chain is Metal transporter Nramp3.2, found in Populus trichocarpa (Western balsam poplar).